The chain runs to 229 residues: 5'-methylthioadenosine/S-adenosylhomocysteine nucleosidase (229 aa).

Glutamate 12 serves as the catalytic Proton acceptor. Substrate is bound by residues glycine 78, isoleucine 152, and 173–174; that span reads ME. The active-site Proton donor is the aspartate 197.

The protein belongs to the PNP/UDP phosphorylase family. MtnN subfamily.

It catalyses the reaction S-adenosyl-L-homocysteine + H2O = S-(5-deoxy-D-ribos-5-yl)-L-homocysteine + adenine. It carries out the reaction S-methyl-5'-thioadenosine + H2O = 5-(methylsulfanyl)-D-ribose + adenine. The catalysed reaction is 5'-deoxyadenosine + H2O = 5-deoxy-D-ribose + adenine. The protein operates within amino-acid biosynthesis; L-methionine biosynthesis via salvage pathway; S-methyl-5-thio-alpha-D-ribose 1-phosphate from S-methyl-5'-thioadenosine (hydrolase route): step 1/2. Its function is as follows. Catalyzes the irreversible cleavage of the glycosidic bond in both 5'-methylthioadenosine (MTA) and S-adenosylhomocysteine (SAH/AdoHcy) to adenine and the corresponding thioribose, 5'-methylthioribose and S-ribosylhomocysteine, respectively. Also cleaves 5'-deoxyadenosine, a toxic by-product of radical S-adenosylmethionine (SAM) enzymes, into 5-deoxyribose and adenine. The polypeptide is 5'-methylthioadenosine/S-adenosylhomocysteine nucleosidase (Pasteurella multocida (strain Pm70)).